Reading from the N-terminus, the 205-residue chain is High frequency lysogenization protein HflD homolog (205 aa).

The protein belongs to the HflD family.

The protein resides in the cytoplasm. It localises to the cell inner membrane. The polypeptide is High frequency lysogenization protein HflD homolog (Haemophilus influenzae (strain PittEE)).